A 575-amino-acid chain; its full sequence is Flagellin A (575 aa).

3 tandem repeats follow at residues 405–409 (GSGFS), 411–415 (GSGFS), and 447–450 (GSGF).

The protein belongs to the bacterial flagellin family. As to quaternary structure, heteromer of flaA and flaB.

The protein resides in the secreted. It localises to the bacterial flagellum. Functionally, flagellin is the subunit protein which polymerizes to form the filaments of bacterial flagella. This Campylobacter jejuni protein is Flagellin A (flaA).